A 607-amino-acid chain; its full sequence is ATP-dependent DNA helicase II subunit 1 (607 aa).

The Ku domain maps to 241 to 452; the sequence is MDLGNDVRIG…IETMQRILRG (212 aa). Positions 570 to 604 constitute an SAP domain; the sequence is IKALKVSQLKDILRDRGLRVSGKKADLLDNLTNYV.

Belongs to the ku70 family. In terms of assembly, heterodimer of pku70 and pku80.

The protein localises to the nucleus. It is found in the chromosome. It localises to the telomere. The catalysed reaction is ATP + H2O = ADP + phosphate + H(+). In terms of biological role, single-stranded DNA-dependent ATP-dependent helicase. Involved in non-homologous end joining (NHEJ) DNA double strand break repair. DNA-binding is sequence-independent but has a high affinity to nicks in double-stranded DNA and to the ends of duplex DNA. Binds to naturally occurring chromosomal ends, and therefore provides chromosomal end protection. Required also for telomere recombination to repair telomeric ends in the absence of telomerase. ku70, of the ku70/ku80 heterodimer, binds to the stem loop of tlc1, the RNA component of telomerase. Required for mating-type switching. Involved in telomere maintenance. Interacts with telomeric repeats and subtelomeric sequences thereby controlling telomere length and protecting against subtelomeric rearrangement. Maintains telomeric chromatin, which is involved in silencing the expression of genes located at the telomere. The polypeptide is ATP-dependent DNA helicase II subunit 1 (pku70) (Schizosaccharomyces pombe (strain 972 / ATCC 24843) (Fission yeast)).